We begin with the raw amino-acid sequence, 450 residues long: tRNA modification GTPase MnmE (450 aa).

3 residues coordinate (6S)-5-formyl-5,6,7,8-tetrahydrofolate: arginine 23, glutamate 81, and lysine 120. The 158-residue stretch at 216 to 373 folds into the TrmE-type G domain; the sequence is GIHLVLAGKP…LLKKIATLAG (158 aa). GTP contacts are provided by residues 226–231, 245–251, 270–273, and 337–340; these read NAGKSS, TPQAGTT, DTAG, and NKAD. Residues serine 230 and threonine 251 each coordinate Mg(2+). Lysine 450 contributes to the (6S)-5-formyl-5,6,7,8-tetrahydrofolate binding site.

The protein belongs to the TRAFAC class TrmE-Era-EngA-EngB-Septin-like GTPase superfamily. TrmE GTPase family. In terms of assembly, homodimer. Heterotetramer of two MnmE and two MnmG subunits. K(+) serves as cofactor.

The protein resides in the cytoplasm. In terms of biological role, exhibits a very high intrinsic GTPase hydrolysis rate. Involved in the addition of a carboxymethylaminomethyl (cmnm) group at the wobble position (U34) of certain tRNAs, forming tRNA-cmnm(5)s(2)U34. In Dichelobacter nodosus (strain VCS1703A), this protein is tRNA modification GTPase MnmE.